Reading from the N-terminus, the 342-residue chain is S-adenosylmethionine:tRNA ribosyltransferase-isomerase (342 aa).

Belongs to the QueA family. In terms of assembly, monomer.

The protein localises to the cytoplasm. The catalysed reaction is 7-aminomethyl-7-carbaguanosine(34) in tRNA + S-adenosyl-L-methionine = epoxyqueuosine(34) in tRNA + adenine + L-methionine + 2 H(+). It functions in the pathway tRNA modification; tRNA-queuosine biosynthesis. Its function is as follows. Transfers and isomerizes the ribose moiety from AdoMet to the 7-aminomethyl group of 7-deazaguanine (preQ1-tRNA) to give epoxyqueuosine (oQ-tRNA). The polypeptide is S-adenosylmethionine:tRNA ribosyltransferase-isomerase (Listeria innocua serovar 6a (strain ATCC BAA-680 / CLIP 11262)).